A 636-amino-acid chain; its full sequence is DNA mismatch repair protein MutL (636 aa).

The segment at 362 to 393 (RKTPEVHEEAEKPEFLVKQEAKNSEEPKNETE) is disordered. A compositionally biased stretch (basic and acidic residues) spans 363–393 (KTPEVHEEAEKPEFLVKQEAKNSEEPKNETE).

It belongs to the DNA mismatch repair MutL/HexB family.

In terms of biological role, this protein is involved in the repair of mismatches in DNA. It is required for dam-dependent methyl-directed DNA mismatch repair. May act as a 'molecular matchmaker', a protein that promotes the formation of a stable complex between two or more DNA-binding proteins in an ATP-dependent manner without itself being part of a final effector complex. In Lactobacillus helveticus (strain DPC 4571), this protein is DNA mismatch repair protein MutL.